We begin with the raw amino-acid sequence, 409 residues long: Elongation factor Tu, chloroplastic (409 aa).

One can recognise a tr-type G domain in the interval 10–214; that stretch reads KPHVNIGTIG…AVDTYIPTPE (205 aa). Positions 19–26 are G1; sequence GHVDHGKT. Residue 19 to 26 participates in GTP binding; that stretch reads GHVDHGKT. Thr-26 serves as a coordination point for Mg(2+). The G2 stretch occupies residues 60 to 64; sequence GITIN. Positions 81–84 are G3; that stretch reads DCPG. Residues 81-85 and 136-139 contribute to the GTP site; these read DCPGH and NKED. Residues 136–139 are G4; sequence NKED. Residues 174-176 are G5; sequence SAL.

The protein belongs to the TRAFAC class translation factor GTPase superfamily. Classic translation factor GTPase family. EF-Tu/EF-1A subfamily.

It is found in the plastid. The protein localises to the chloroplast. The catalysed reaction is GTP + H2O = GDP + phosphate + H(+). GTP hydrolase that promotes the GTP-dependent binding of aminoacyl-tRNA to the A-site of ribosomes during protein biosynthesis. In Porphyra purpurea (Red seaweed), this protein is Elongation factor Tu, chloroplastic (tufA).